A 351-amino-acid polypeptide reads, in one-letter code: SLAM family member 6 (351 aa).

The first 30 residues, 1 to 30 (MAVSRAPAPDSACQRMVWLFPLVFCLGSGS), serve as a signal peptide directing secretion. Residues 31–239 (EVSQSSSDPQ…KGVLTNPPWN (209 aa)) lie on the Extracellular side of the membrane. An Ig-like V-type domain is found at 36–130 (SSDPQLMNGV…YTAQITTKDS (95 aa)). N-linked (GlcNAc...) asparagine glycans are attached at residues Asn82, Asn101, Asn112, Asn152, Asn159, Asn172, Asn186, Asn193, and Asn218. In terms of domain architecture, Ig-like C2-type spans 147 to 210 (NLETTNYTLL…RNSGDQTYVC (64 aa)). 2 disulfides stabilise this stretch: Cys162/Cys229 and Cys168/Cys210. A helical membrane pass occupies residues 240-262 (AVWFMTTISIISAVILIFVCWSI). Residues 263–351 (HVWKRRGSLP…KVNTLINYNS (89 aa)) lie on the Cytoplasmic side of the membrane. Residues 272-295 (PLTSQHPESSQSTDGPGSPGNTVY) form a disordered region. 2 consecutive short sequence motifs (ITSM) follow at residues 293-298 (TVYAQV) and 317-322 (TIYSIV). The residue at position 319 (Tyr319) is a Phosphotyrosine.

As to quaternary structure, homodimer. Interacts with PTN6 and, upon phosphorylation, with PTN11 and SH2D1A/SAP. Post-translationally, phosphorylated. In terms of tissue distribution, expressed on hematopoietic cells. Isoform 3 is expressed in thymocytes and B lymphocytes of C57Bl/6 strain.

Its subcellular location is the cell membrane. Its function is as follows. Self-ligand receptor of the signaling lymphocytic activation molecule (SLAM) family. SLAM receptors triggered by homo- or heterotypic cell-cell interactions are modulating the activation and differentiation of a wide variety of immune cells and thus are involved in the regulation and interconnection of both innate and adaptive immune response. Activities are controlled by presence or absence of small cytoplasmic adapter proteins, SH2D1A/SAP and/or SH2D1B/EAT-2. Triggers cytolytic activity only in natural killer cells (NK) expressing high surface densities of natural cytotoxicity receptors. Positive signaling in NK cells implicates phosphorylation of VAV1. NK cell activation seems to depend on SH2D1B and not on SH2D1A. In conjunction with SLAMF1 controls the transition between positive selection and the subsequent expansion and differentiation of the thymocytic natural killer T (NKT) cell lineage. Promotes T cell differentiation into a helper T-cell Th17 phenotype leading to increased IL-17 secretion; the costimulatory activity requires SH2D1A. Promotes recruitment of RORC to the IL-17 promoter. In conjunction with SLAMF1 and CD84/SLAMF5 may be a negative regulator of the humoral immune response. In the absence of SH2D1A/SAP can transmit negative signals to CD4(+) T-cells and NKT cells. Negatively regulates germinal center formation by inhibiting T-cell:B-cell adhesion; the function probably implicates increased association with PTPN6/SHP-1 via ITSMs in absence of SH2D1A/SAP. However, reported to mediated T-cell adhesion, to participate in stable T-cell:B-cell interactions and to be involved in maintaining B-cell tolerance in germinal centers and in preventing autoimmunity. Involved in regulation of autoimmunity. Isoform 3 may be suppressor of pathogenic T-cell proliferation. This Mus musculus (Mouse) protein is SLAM family member 6 (Slamf6).